A 497-amino-acid chain; its full sequence is Aldehyde dehydrogenase (497 aa).

Residue 241 to 246 coordinates NAD(+); it reads GSTVVG. Glu-264 serves as the catalytic Proton acceptor. Cys-298 (nucleophile) is an active-site residue.

Belongs to the aldehyde dehydrogenase family.

Its subcellular location is the cytoplasm. The enzyme catalyses an aldehyde + NAD(+) + H2O = a carboxylate + NADH + 2 H(+). Its pathway is alcohol metabolism; ethanol degradation; acetate from ethanol: step 2/2. The chain is Aldehyde dehydrogenase (ALTA10) from Alternaria alternata (Alternaria rot fungus).